A 213-amino-acid chain; its full sequence is ATP phosphoribosyltransferase (213 aa).

It belongs to the ATP phosphoribosyltransferase family. Short subfamily. Heteromultimer composed of HisG and HisZ subunits.

It is found in the cytoplasm. The catalysed reaction is 1-(5-phospho-beta-D-ribosyl)-ATP + diphosphate = 5-phospho-alpha-D-ribose 1-diphosphate + ATP. It functions in the pathway amino-acid biosynthesis; L-histidine biosynthesis; L-histidine from 5-phospho-alpha-D-ribose 1-diphosphate: step 1/9. Catalyzes the condensation of ATP and 5-phosphoribose 1-diphosphate to form N'-(5'-phosphoribosyl)-ATP (PR-ATP). Has a crucial role in the pathway because the rate of histidine biosynthesis seems to be controlled primarily by regulation of HisG enzymatic activity. The polypeptide is ATP phosphoribosyltransferase (hisG) (Listeria innocua serovar 6a (strain ATCC BAA-680 / CLIP 11262)).